The following is a 317-amino-acid chain: Transaldolase (317 aa).

The active-site Schiff-base intermediate with substrate is K132.

The protein belongs to the transaldolase family. Type 1 subfamily. Homodimer.

The protein localises to the cytoplasm. The catalysed reaction is D-sedoheptulose 7-phosphate + D-glyceraldehyde 3-phosphate = D-erythrose 4-phosphate + beta-D-fructose 6-phosphate. It participates in carbohydrate degradation; pentose phosphate pathway; D-glyceraldehyde 3-phosphate and beta-D-fructose 6-phosphate from D-ribose 5-phosphate and D-xylulose 5-phosphate (non-oxidative stage): step 2/3. In terms of biological role, transaldolase is important for the balance of metabolites in the pentose-phosphate pathway. The sequence is that of Transaldolase from Yersinia pseudotuberculosis serotype O:1b (strain IP 31758).